The chain runs to 2465 residues: Highly reducing polyketide synthase milA (2465 aa).

In terms of domain architecture, Ketosynthase family 3 (KS3) spans 1 to 434 (MEPIAIVGSA…GANCHVILEG (434 aa)). Catalysis depends on for beta-ketoacyl synthase activity residues C172, H311, and H355. The tract at residues 450 to 476 (KPSLSSSPSLSPTSTSPPTPRTPANSL) is disordered. Residues 451 to 463 (PSLSSSPSLSPTS) show a composition bias toward low complexity. The interval 567 to 888 (VFTGQGAQWA…CGTLSRAVDD (322 aa)) is malonyl-CoA:ACP transacylase (MAT) domain. The tract at residues 957–1096 (HPLLGVRTNT…GKVQLFVGGD (140 aa)) is N-terminal hotdog fold. The segment at 957–1265 (HPLLGVRTNT…LTVSPVAPVT (309 aa)) is dehydratase (DH) domain. Residues 957–1267 (HPLLGVRTNT…VSPVAPVTAD (311 aa)) form the PKS/mFAS DH domain. H989 acts as the Proton acceptor; for dehydratase activity in catalysis. A C-terminal hotdog fold region spans residues 1111-1267 (LNEIDVDTFY…VSPVAPVTAD (157 aa)). D1174 serves as the catalytic Proton donor; for dehydratase activity. Residues 1334-1367 (HSTNGLTNGHASTNGHGSTNGHISTNGHSTNGDV) form a disordered region. A ketoreductase (KR)domain region spans residues 2095-2269 (TYFLVGMAGS…AASVINLTGV (175 aa)). Positions 2384 to 2459 (DMIFRAFQTV…QVVWSVVHQI (76 aa)) constitute a Carrier domain. S2419 carries the post-translational modification O-(pantetheine 4'-phosphoryl)serine.

Pantetheine 4'-phosphate serves as cofactor.

It catalyses the reaction 10 malonyl-CoA + acetyl-CoA + 3 AH2 + 8 NADPH + 18 H(+) = cordypyrone A + 3 A + 10 CO2 + 8 NADP(+) + 11 CoA + 8 H2O. It functions in the pathway secondary metabolite biosynthesis. Its function is as follows. Highly reducing polyketide synthase (HR-PKS); part of the gene cluster that mediates the biosynthesis of cordypyrones A and B, 2 pyrones that show modest activities against pathogenic bacteria including methicillin-resistant Staphylococcus aureus (MRSA), Mycobacterium tuberculosis and Bacillus cereus. The HR-PKS milA catalyzes the formation of cordypyrones A via condensation of one acetate with 10 malonate units. Since milA lacks an enoyl reductase domain, the 2 beta-keto processing domains DH and KR of milA collaborate with the trans-enoyl reductase milB to catalyze the different levels of reduction. The cytochrome P450 monooxygenase milC then hydroxylates the C-22 of cordypyrones A to yield cordypyrones B. This Cordyceps militaris (strain CM01) (Caterpillar fungus) protein is Highly reducing polyketide synthase milA.